Reading from the N-terminus, the 320-residue chain is uncharacterized protein (320 aa).

A disordered region spans residues 1–40 (MDHPSTSSLPRKKVKAGVKKAGKKTGKKTTGKKKTTPSAI). Residues 10 to 35 (PRKKVKAGVKKAGKKTGKKTTGKKKT) are compositionally biased toward basic residues. Residues 51 to 71 (LLVLLAVLSYLAALSLGLYIM) form a helical membrane-spanning segment. Residues Asn-92, Asn-122, Asn-154, and Asn-167 are each glycosylated (N-linked (GlcNAc...) asparagine). 2 helical membrane-spanning segments follow: residues 186–206 (PLVHLLLFFVTGIMLFVAMTG) and 216–236 (MLVTAIALSAFSLALALVTVL). N-linked (GlcNAc...) asparagine glycosylation is present at Asn-247. Residues 272–292 (VQGALVAIVAVFYLTMGVVFV) traverse the membrane as a helical segment.

The protein localises to the membrane. It participates in secondary metabolite biosynthesis; terpenoid biosynthesis. Its function is as follows. Part of the gene cluster that mediates the biosynthesis of an ophiobolin family sesterterpenoid. This is an uncharacterized protein from Aspergillus terreus.